The sequence spans 116 residues: Large ribosomal subunit protein bL17 (116 aa).

The protein belongs to the bacterial ribosomal protein bL17 family. As to quaternary structure, part of the 50S ribosomal subunit. Contacts protein L32.

The protein is Large ribosomal subunit protein bL17 of Trichodesmium erythraeum (strain IMS101).